Here is a 247-residue protein sequence, read N- to C-terminus: Adenosylcobinamide-GDP ribazoletransferase (247 aa).

The next 5 helical transmembrane spans lie at 34 to 54, 59 to 79, 113 to 133, 138 to 158, and 194 to 214; these read IITF…VFMV, CGVP…TGGF, GGLA…ELAL, ILAS…LLMY, and VLLP…AIFI.

Belongs to the CobS family. The cofactor is Mg(2+).

It localises to the cell inner membrane. The enzyme catalyses alpha-ribazole + adenosylcob(III)inamide-GDP = adenosylcob(III)alamin + GMP + H(+). It carries out the reaction alpha-ribazole 5'-phosphate + adenosylcob(III)inamide-GDP = adenosylcob(III)alamin 5'-phosphate + GMP + H(+). It functions in the pathway cofactor biosynthesis; adenosylcobalamin biosynthesis; adenosylcobalamin from cob(II)yrinate a,c-diamide: step 7/7. Joins adenosylcobinamide-GDP and alpha-ribazole to generate adenosylcobalamin (Ado-cobalamin). Also synthesizes adenosylcobalamin 5'-phosphate from adenosylcobinamide-GDP and alpha-ribazole 5'-phosphate. The protein is Adenosylcobinamide-GDP ribazoletransferase of Shigella dysenteriae serotype 1 (strain Sd197).